The primary structure comprises 827 residues: Probable inorganic carbon transporter subunit DabA2 (827 aa).

Residues C351, D353, H524, and C539 each contribute to the Zn(2+) site.

It belongs to the inorganic carbon transporter (TC 9.A.2) DabA family. As to quaternary structure, forms a complex with DabB2, possibly a heterodimer. The cofactor is Zn(2+).

It is found in the cell inner membrane. With respect to regulation, uptake of inorganic carbon by cells in the presence of thiosulphate is fully inhibited by the uncouplers carbonyl cyanide m-chlorophenyl hydrazone (CCCP), carbonyl cyanide p-trifluoromethoxyphenyl hydrazone (FCCP), S13 or SF6847. Not inhibited by the ATPase inhibitor N,N-dicyclohexylcarbodiimide (DCCD). Inorganic carbon uptake is inhibited by the ionophore CCCP, suggesting uptake is coupled to a cation gradient. Its function is as follows. Part of an energy-coupled inorganic carbon pump; its substrate may be carbon dioxide. Expression of both dabA2 and dabB2 (DAB2) restores growth in ambient air to E.coli deleted of its carbonic anhydrase genes (called CAfree, deletion of 'can' and 'cynT'); neither dabA2 or dabB2 alone is sufficient. Rescue is pH-independent, suggesting it transports CO(2) and not carbonate ions. Together the genes allow greater than normal uptake of inorganic carbon by E.coli. Uptake of carbon dioxide rather than bicarbonate has been suggested based on kinetic calculations. This Halothiobacillus neapolitanus (strain ATCC 23641 / c2) (Thiobacillus neapolitanus) protein is Probable inorganic carbon transporter subunit DabA2.